Here is a 188-residue protein sequence, read N- to C-terminus: Elongation factor P-like protein (188 aa).

The protein belongs to the elongation factor P family.

This is Elongation factor P-like protein from Xanthomonas oryzae pv. oryzae (strain MAFF 311018).